The primary structure comprises 282 residues: Elongation factor Ts (282 aa).

Residues 80 to 83 (TDFV) are involved in Mg(2+) ion dislocation from EF-Tu.

The protein belongs to the EF-Ts family.

It is found in the cytoplasm. Its function is as follows. Associates with the EF-Tu.GDP complex and induces the exchange of GDP to GTP. It remains bound to the aminoacyl-tRNA.EF-Tu.GTP complex up to the GTP hydrolysis stage on the ribosome. The protein is Elongation factor Ts (tsf) of Chlamydia trachomatis serovar D (strain ATCC VR-885 / DSM 19411 / UW-3/Cx).